A 190-amino-acid polypeptide reads, in one-letter code: Large ribosomal subunit protein uL5 (190 aa).

It belongs to the universal ribosomal protein uL5 family. As to quaternary structure, part of the 50S ribosomal subunit; part of the 5S rRNA/L5/L18/L25 subcomplex. Contacts the 5S rRNA and the P site tRNA. Forms a bridge to the 30S subunit in the 70S ribosome.

In terms of biological role, this is one of the proteins that bind and probably mediate the attachment of the 5S RNA into the large ribosomal subunit, where it forms part of the central protuberance. In the 70S ribosome it contacts protein S13 of the 30S subunit (bridge B1b), connecting the 2 subunits; this bridge is implicated in subunit movement. Contacts the P site tRNA; the 5S rRNA and some of its associated proteins might help stabilize positioning of ribosome-bound tRNAs. The sequence is that of Large ribosomal subunit protein uL5 from Corynebacterium efficiens (strain DSM 44549 / YS-314 / AJ 12310 / JCM 11189 / NBRC 100395).